The primary structure comprises 369 residues: 4-hydroxy-3-methylbut-2-en-1-yl diphosphate synthase (flavodoxin) (369 aa).

[4Fe-4S] cluster-binding residues include cysteine 270, cysteine 273, cysteine 305, and glutamate 312.

Belongs to the IspG family. It depends on [4Fe-4S] cluster as a cofactor.

It catalyses the reaction (2E)-4-hydroxy-3-methylbut-2-enyl diphosphate + oxidized [flavodoxin] + H2O + 2 H(+) = 2-C-methyl-D-erythritol 2,4-cyclic diphosphate + reduced [flavodoxin]. Its pathway is isoprenoid biosynthesis; isopentenyl diphosphate biosynthesis via DXP pathway; isopentenyl diphosphate from 1-deoxy-D-xylulose 5-phosphate: step 5/6. In terms of biological role, converts 2C-methyl-D-erythritol 2,4-cyclodiphosphate (ME-2,4cPP) into 1-hydroxy-2-methyl-2-(E)-butenyl 4-diphosphate. This chain is 4-hydroxy-3-methylbut-2-en-1-yl diphosphate synthase (flavodoxin), found in Pseudomonas putida (strain GB-1).